The sequence spans 390 residues: Cytochrome b (390 aa).

A run of 4 helical transmembrane segments spans residues 32–52 (MGSLLGLCLVIQILTGIFMAM), 76–98 (WFLRYAHANGASFFFICMYIHMG), 113–133 (LWTIGVIIFILTMATAFLGYC), and 179–199 (FFALHYLFPFVIAAVVIMHMM). Residues His-82 and His-96 each contribute to the heme b site. Heme b is bound by residues His-183 and His-197. His-202 serves as a coordination point for a ubiquinone. The next 4 membrane-spanning stretches (helical) occupy residues 225-245 (FVFKDLITVFVFLIVFSLFVF), 289-309 (LMGVITMFSAILVLLVLPFTD), 321-341 (LSKLFFFLFVFNFVLLGQIGA), and 348-368 (YILMGQISTFLYFAYFLVFIP).

It belongs to the cytochrome b family. As to quaternary structure, fungal cytochrome b-c1 complex contains 10 subunits; 3 respiratory subunits, 2 core proteins and 5 low-molecular weight proteins. Cytochrome b-c1 complex is a homodimer. Heme b serves as cofactor.

The protein resides in the mitochondrion inner membrane. In terms of biological role, component of the ubiquinol-cytochrome c reductase complex (complex III or cytochrome b-c1 complex) that is part of the mitochondrial respiratory chain. The b-c1 complex mediates electron transfer from ubiquinol to cytochrome c. Contributes to the generation of a proton gradient across the mitochondrial membrane that is then used for ATP synthesis. This chain is Cytochrome b (COB), found in Naumovozyma castellii (Yeast).